The primary structure comprises 333 residues: SPbeta prophage-derived recombinase-like protein YomM (333 aa).

The Core-binding (CB) domain maps to 30 to 113 (EEHRNLVQEF…GVSSLNNYIE (84 aa)). Residues 142–332 (YEKVKVTYDD…DFEEEKNQIF (191 aa)) enclose the Tyr recombinase domain. Active-site residues include R180, K211, H281, and H308. The active-site O-(3'-phospho-DNA)-tyrosine intermediate is the Y319.

This sequence belongs to the 'phage' integrase family.

The chain is SPbeta prophage-derived recombinase-like protein YomM (yomM) from Bacillus subtilis (strain 168).